The following is a 771-amino-acid chain: U3 small nucleolar RNA-associated protein 14 homolog A (771 aa).

The segment at 23–49 (PKDYLLSESEDEGDNDGERKHQKLLEA) is disordered. 5 positions are modified to phosphoserine: S29, S31, S52, S77, and S81. Positions 40–67 (ERKHQKLLEAISSLDGKNRRKLAERSEA) form a coiled coil. A Glycyl lysine isopeptide (Lys-Gly) (interchain with G-Cter in SUMO2) cross-link involves residue K122. Position 205 is a phosphothreonine (T205). Coiled-coil stretches lie at residues 216 to 290 (SLEE…EKAR) and 317 to 347 (LEAR…EEEE). Disordered stretches follow at residues 334 to 355 (TQKL…DVEE) and 367 to 557 (MNAD…KKEQ). Residues 342–355 (ESEEEEGGTEDVEE) are compositionally biased toward acidic residues. Positions 399 to 436 (LEAHGVSESEGEERPVAEEEILLREFEERRSLRKRSEL) are enriched in basic and acidic residues. S405 and S407 each carry phosphoserine. R433 carries the post-translational modification Citrulline. Phosphoserine is present on residues S437 and S445. Residue K449 forms a Glycyl lysine isopeptide (Lys-Gly) (interchain with G-Cter in SUMO2) linkage. Position 453 is a phosphoserine (S453). Basic and acidic residues predominate over residues 504 to 529 (RPERVQTLEELEELGKEECFQNKELP). K519 participates in a covalent cross-link: Glycyl lysine isopeptide (Lys-Gly) (interchain with G-Cter in SUMO2). Over residues 535-544 (GQQSERTPNN) the composition is skewed to polar residues. Over residues 547–557 (DAPKEKKKKEQ) the composition is skewed to basic and acidic residues. S569 bears the Phosphoserine mark. Citrulline is present on R589. Residue K733 forms a Glycyl lysine isopeptide (Lys-Gly) (interchain with G-Cter in SUMO2) linkage. Residues 740-751 (RSSSRSDLSVIQ) show a composition bias toward polar residues. The disordered stretch occupies residues 740–771 (RSSSRSDLSVIQRNPKRITTRHKKQLKKCSVD). Positions 753–771 (NPKRITTRHKKQLKKCSVD) are enriched in basic residues.

This sequence belongs to the UTP14 family. As to quaternary structure, interacts with DHX37. Post-translationally, citrullinated by PADI4. In terms of tissue distribution, ubiquitously expressed.

It is found in the nucleus. The protein localises to the nucleolus. Functionally, may be required for ribosome biogenesis. This is U3 small nucleolar RNA-associated protein 14 homolog A (UTP14A) from Homo sapiens (Human).